Reading from the N-terminus, the 294-residue chain is Nucleotide-binding protein NT01CX_1284 (294 aa).

Residue 8–15 (GLSGAGKS) coordinates ATP. 59-62 (DIRG) contributes to the GTP binding site.

This sequence belongs to the RapZ-like family.

Displays ATPase and GTPase activities. This is Nucleotide-binding protein NT01CX_1284 from Clostridium novyi (strain NT).